We begin with the raw amino-acid sequence, 493 residues long: Sorting nexin-4 (493 aa).

The segment at 1–77 is disordered; that stretch reads MAVIDQDNFS…ILDCTVSDPH (77 aa). Over residues 7-28 the composition is skewed to polar residues; that stretch reads DNFSNISWHSEQNAESAASTAQ. The span at 56–65 shows a compositional bias: basic and acidic residues; that stretch reads MEHDELDHSG. A PX domain is found at 68-190; that stretch reads ILDCTVSDPH…AFLESPDWNA (123 aa). 4 residues coordinate a 1,2-diacyl-sn-glycero-3-phospho-(1D-myo-inositol-3-phosphate): R111, T113, K137, and R156. 3 coiled-coil regions span residues 248-292, 338-363, and 405-442; these read EIKE…QKLI, SGTL…EYLN, and EQAR…QVSR.

The protein belongs to the sorting nexin family.

It is found in the cytoplasm. Its subcellular location is the membrane. The protein localises to the endosome membrane. In terms of biological role, sorting nexin, involved in the separation or division of vacuoles throughout the entire life cycle of the cells. Involved in retrieval of late-Golgi SNAREs from post-Golgi endosomes to the trans-Golgi network, for cytoplasm to vacuole transport (Cvt), and autophagy of large cargos including mitophagy, pexophagy and glycophagy. The protein is Sorting nexin-4 (vsp-5) of Neurospora crassa (strain ATCC 24698 / 74-OR23-1A / CBS 708.71 / DSM 1257 / FGSC 987).